An 835-amino-acid chain; its full sequence is Protein P (835 aa).

A terminal protein domain (TP) region spans residues 1-176 (MPLSYQHFRK…FFGTPYTWEH (176 aa)). Positions 177-334 (KLQHGTQPVN…HCLHHIVKLL (158 aa)) are spacer. Disordered stretches follow at residues 211 to 235 (LGQK…WSRT) and 258 to 288 (RHPS…PTSH). Residues 335–680 (DDWGPCQHHG…YMHLYPVARQ (346 aa)) form a polymerase/reverse transcriptase domain (RT) region. Positions 345–590 (HHFIRIPRTP…KALNFMGYVI (246 aa)) constitute a Reverse transcriptase domain. Residues aspartate 417, aspartate 541, and aspartate 542 each coordinate Mg(2+).

The protein belongs to the hepadnaviridae P protein family.

It catalyses the reaction DNA(n) + a 2'-deoxyribonucleoside 5'-triphosphate = DNA(n+1) + diphosphate. The enzyme catalyses Endonucleolytic cleavage to 5'-phosphomonoester.. Its activity is regulated as follows. Activated by host HSP70 and HSP40 in vitro to be able to bind the epsilon loop of the pgRNA. Because deletion of the RNase H region renders the protein partly chaperone-independent, the chaperones may be needed indirectly to relieve occlusion of the RNA-binding site by this domain. Inhibited by several reverse-transcriptase inhibitors: Lamivudine, Adefovir and Entecavir. In terms of biological role, multifunctional enzyme that converts the viral RNA genome into dsDNA in viral cytoplasmic capsids. This enzyme displays a DNA polymerase activity that can copy either DNA or RNA templates, and a ribonuclease H (RNase H) activity that cleaves the RNA strand of RNA-DNA heteroduplexes in a partially processive 3'- to 5'-endonucleasic mode. Neo-synthesized pregenomic RNA (pgRNA) are encapsidated together with the P protein, and reverse-transcribed inside the nucleocapsid. Initiation of reverse-transcription occurs first by binding the epsilon loop on the pgRNA genome, and is initiated by protein priming, thereby the 5'-end of (-)DNA is covalently linked to P protein. Partial (+)DNA is synthesized from the (-)DNA template and generates the relaxed circular DNA (RC-DNA) genome. After budding and infection, the RC-DNA migrates in the nucleus, and is converted into a plasmid-like covalently closed circular DNA (cccDNA). The activity of P protein does not seem to be necessary for cccDNA generation, and is presumably released from (+)DNA by host nuclear DNA repair machinery. The polypeptide is Protein P (Woolly monkey hepatitis B virus (isolate Louisville) (WMHBV)).